The chain runs to 246 residues: UDP-N-acetyl-D-mannosaminuronic acid transferase (246 aa).

Belongs to the glycosyltransferase 26 family.

The catalysed reaction is UDP-N-acetyl-alpha-D-mannosaminouronate + N-acetyl-alpha-D-glucosaminyl-di-trans,octa-cis-undecaprenyl diphosphate = beta-D-ManNAcA-(1-&gt;4)-alpha-D-GlcNAc-di-trans,octa-cis-undecaprenyl diphosphate + UDP + H(+). The protein operates within bacterial outer membrane biogenesis; enterobacterial common antigen biosynthesis. In terms of biological role, catalyzes the synthesis of Und-PP-GlcNAc-ManNAcA (Lipid II), the second lipid-linked intermediate involved in enterobacterial common antigen (ECA) synthesis. The protein is UDP-N-acetyl-D-mannosaminuronic acid transferase of Escherichia coli O6:K15:H31 (strain 536 / UPEC).